Consider the following 443-residue polypeptide: MEKTYHFTGIKGSGMSALALMLHQMGKKVQGSDSTDYFFTQRGLEQADVPLLPFDEKNIKPEFELIAGNAFRDDNNVEIAFAHKNGFPFKRYHEFLGHFMEDFTSIGVAGAHGKTSTTGMLAHVMSNIVDTSYLIGDGTGRGIEGSEYFVFESDEYERHFMPYHPEYTIMTNIDFDHPDYFEGIEDVTSAFQDYANNIKKGIFAYGEDVNLRKLTAKAPIYYYGFEANDDYRAENLVRSTRGSSFDAYFRGEKIGHFVVPAYGKHNVLNALSVVAVCHNLGLDMTEVADHLLTFRGVKRRFTEKKVGETVIIDDFAHHPTEIEATLDAARQKYPDREIVAVFQPHTFTRTIAFADEFAEVLDHADTVYLAQIYGSAREVDHHEITAQDLADKVRKPAKVIDLDNVSPLLDHDRGVYVFMGAGNIQKYELAFEKLLSQVSTNLQ.

110 to 116 (GAHGKTS) is an ATP binding site.

It belongs to the MurCDEF family.

Its subcellular location is the cytoplasm. It carries out the reaction UDP-N-acetyl-alpha-D-muramate + L-alanine + ATP = UDP-N-acetyl-alpha-D-muramoyl-L-alanine + ADP + phosphate + H(+). It functions in the pathway cell wall biogenesis; peptidoglycan biosynthesis. Its function is as follows. Cell wall formation. The protein is UDP-N-acetylmuramate--L-alanine ligase of Lactococcus lactis subsp. lactis (strain IL1403) (Streptococcus lactis).